The chain runs to 442 residues: uncharacterized protein (442 aa).

The first 23 residues, Met-1–Ala-23, serve as a signal peptide directing secretion. Disordered stretches follow at residues Thr-36–Asp-67 and Ala-91–Arg-115. Over residues Thr-48–Asp-67 the composition is skewed to low complexity. Residues Asn-64, Asn-92, Asn-99, Asn-130, Asn-174, Asn-225, Asn-244, Asn-346, Asn-363, Asn-386, and Asn-398 are each glycosylated (N-linked (GlcNAc...) asparagine).

It is found in the secreted. This is an uncharacterized protein from Arthroderma benhamiae (strain ATCC MYA-4681 / CBS 112371) (Trichophyton mentagrophytes).